Reading from the N-terminus, the 243-residue chain is Type III pantothenate kinase (243 aa).

Position 6–13 (Asp6–Lys13) interacts with ATP. A substrate-binding site is contributed by Gly101–Ile104. Asp103 (proton acceptor) is an active-site residue. Residue Thr125 coordinates ATP. Thr176 is a binding site for substrate.

It belongs to the type III pantothenate kinase family. Homodimer. NH4(+) is required as a cofactor. Requires K(+) as cofactor.

The protein resides in the cytoplasm. The catalysed reaction is (R)-pantothenate + ATP = (R)-4'-phosphopantothenate + ADP + H(+). The protein operates within cofactor biosynthesis; coenzyme A biosynthesis; CoA from (R)-pantothenate: step 1/5. Catalyzes the phosphorylation of pantothenate (Pan), the first step in CoA biosynthesis. The sequence is that of Type III pantothenate kinase from Mycoplasma mobile (strain ATCC 43663 / 163K / NCTC 11711) (Mesomycoplasma mobile).